Here is a 228-residue protein sequence, read N- to C-terminus: UPF0173 metal-dependent hydrolase PTH_1415 (228 aa).

It belongs to the UPF0173 family.

This chain is UPF0173 metal-dependent hydrolase PTH_1415, found in Pelotomaculum thermopropionicum (strain DSM 13744 / JCM 10971 / SI).